Here is a 303-residue protein sequence, read N- to C-terminus: Oxygen-dependent coproporphyrinogen-III oxidase (303 aa).

S93 is a binding site for substrate. H97 and H107 together coordinate a divalent metal cation. The Proton donor role is filled by H107. 109–111 lines the substrate pocket; the sequence is NIR. The a divalent metal cation site is built by H146 and H176. An important for dimerization region spans residues 241–276; it reads YVEFNLLLDRGTLFGIQSNGRIESILSSMPPLVKWE.

This sequence belongs to the aerobic coproporphyrinogen-III oxidase family. Homodimer. The cofactor is a divalent metal cation.

It is found in the cytoplasm. The enzyme catalyses coproporphyrinogen III + O2 + 2 H(+) = protoporphyrinogen IX + 2 CO2 + 2 H2O. Its pathway is porphyrin-containing compound metabolism; protoporphyrin-IX biosynthesis; protoporphyrinogen-IX from coproporphyrinogen-III (O2 route): step 1/1. Functionally, involved in the heme biosynthesis. Catalyzes the aerobic oxidative decarboxylation of propionate groups of rings A and B of coproporphyrinogen-III to yield the vinyl groups in protoporphyrinogen-IX. This chain is Oxygen-dependent coproporphyrinogen-III oxidase, found in Wigglesworthia glossinidia brevipalpis.